Here is a 225-residue protein sequence, read N- to C-terminus: Cytochrome c oxidase subunit 2 (225 aa).

Over 1–25 (MSTWMMFMFQESNSLYADNLVSFHN) the chain is Mitochondrial intermembrane. The chain crosses the membrane as a helical span at residues 26–47 (MVMIIVIMISTLTVYIIFDLFL). Over 48–62 (NKFSNLYLLKNHNIE) the chain is Mitochondrial matrix. A helical membrane pass occupies residues 63 to 82 (IIWMIVPIVILLIICFPSLK). Topologically, residues 83–225 (ILYLIDEIVN…YFMNWIYKMN (143 aa)) are mitochondrial intermembrane. Cu cation contacts are provided by His-159, Cys-194, Glu-196, Cys-198, His-202, and Met-205. Residue Glu-196 participates in Mg(2+) binding.

Belongs to the cytochrome c oxidase subunit 2 family. In terms of assembly, component of the cytochrome c oxidase (complex IV, CIV), a multisubunit enzyme composed of a catalytic core of 3 subunits and several supernumerary subunits. The complex exists as a monomer or a dimer and forms supercomplexes (SCs) in the inner mitochondrial membrane with ubiquinol-cytochrome c oxidoreductase (cytochrome b-c1 complex, complex III, CIII). Requires Cu cation as cofactor.

The protein resides in the mitochondrion inner membrane. The enzyme catalyses 4 Fe(II)-[cytochrome c] + O2 + 8 H(+)(in) = 4 Fe(III)-[cytochrome c] + 2 H2O + 4 H(+)(out). Its function is as follows. Component of the cytochrome c oxidase, the last enzyme in the mitochondrial electron transport chain which drives oxidative phosphorylation. The respiratory chain contains 3 multisubunit complexes succinate dehydrogenase (complex II, CII), ubiquinol-cytochrome c oxidoreductase (cytochrome b-c1 complex, complex III, CIII) and cytochrome c oxidase (complex IV, CIV), that cooperate to transfer electrons derived from NADH and succinate to molecular oxygen, creating an electrochemical gradient over the inner membrane that drives transmembrane transport and the ATP synthase. Cytochrome c oxidase is the component of the respiratory chain that catalyzes the reduction of oxygen to water. Electrons originating from reduced cytochrome c in the intermembrane space (IMS) are transferred via the dinuclear copper A center (CU(A)) of subunit 2 and heme A of subunit 1 to the active site in subunit 1, a binuclear center (BNC) formed by heme A3 and copper B (CU(B)). The BNC reduces molecular oxygen to 2 water molecules using 4 electrons from cytochrome c in the IMS and 4 protons from the mitochondrial matrix. The sequence is that of Cytochrome c oxidase subunit 2 (COII) from Apis florea (Dwarf honeybee).